We begin with the raw amino-acid sequence, 245 residues long: 4-hydroxy-tetrahydrodipicolinate reductase (245 aa).

Residues 8–13 (GSTGKM), 78–80 (GTT), and 102–105 (SANM) contribute to the NAD(+) site. H134 (proton donor/acceptor) is an active-site residue. H135 lines the (S)-2,3,4,5-tetrahydrodipicolinate pocket. K138 serves as the catalytic Proton donor. (S)-2,3,4,5-tetrahydrodipicolinate is bound at residue 144-145 (GT).

This sequence belongs to the DapB family.

It localises to the cytoplasm. It catalyses the reaction (S)-2,3,4,5-tetrahydrodipicolinate + NAD(+) + H2O = (2S,4S)-4-hydroxy-2,3,4,5-tetrahydrodipicolinate + NADH + H(+). The enzyme catalyses (S)-2,3,4,5-tetrahydrodipicolinate + NADP(+) + H2O = (2S,4S)-4-hydroxy-2,3,4,5-tetrahydrodipicolinate + NADPH + H(+). It functions in the pathway amino-acid biosynthesis; L-lysine biosynthesis via DAP pathway; (S)-tetrahydrodipicolinate from L-aspartate: step 4/4. Functionally, catalyzes the conversion of 4-hydroxy-tetrahydrodipicolinate (HTPA) to tetrahydrodipicolinate. In Rickettsia akari (strain Hartford), this protein is 4-hydroxy-tetrahydrodipicolinate reductase.